A 187-amino-acid polypeptide reads, in one-letter code: Ribosome-recycling factor (187 aa).

Residues 141-169 (LKKGNKNGDFNDDEFHDLEKKVQNETDAG) form a disordered region.

This sequence belongs to the RRF family.

The protein resides in the cytoplasm. Functionally, responsible for the release of ribosomes from messenger RNA at the termination of protein biosynthesis. May increase the efficiency of translation by recycling ribosomes from one round of translation to another. The chain is Ribosome-recycling factor from Limosilactobacillus reuteri (strain DSM 20016) (Lactobacillus reuteri).